A 188-amino-acid chain; its full sequence is MSKNIVMLGLPGVGKGTNADIMVEDFKLPHISTGDIFRSAMANHTELGDKAKSFMDAGNLVPDEITNGIVNERLNEADVKDAGGFILDGYPRNTSQADSLESFLRSIQQKLNAVIYLDASEKTVTNRMLGRGREDDTPEVVAHRIDVAKKETMPLVEYYRNKGSLYTIDANGEVSVVYPKIKKLVSNL.

12–17 (GVGKGT) is a binding site for ATP. The NMP stretch occupies residues 32–61 (STGDIFRSAMANHTELGDKAKSFMDAGNLV). AMP is bound by residues threonine 33, arginine 38, 59-61 (NLV), 89-92 (GYPR), and glutamine 96. An LID region spans residues 130-136 (GRGREDD). Arginine 131 serves as a coordination point for ATP. AMP contacts are provided by arginine 133 and arginine 144. Glycine 172 is an ATP binding site.

This sequence belongs to the adenylate kinase family. In terms of assembly, monomer.

The protein localises to the cytoplasm. It carries out the reaction AMP + ATP = 2 ADP. It functions in the pathway purine metabolism; AMP biosynthesis via salvage pathway; AMP from ADP: step 1/1. In terms of biological role, catalyzes the reversible transfer of the terminal phosphate group between ATP and AMP. Plays an important role in cellular energy homeostasis and in adenine nucleotide metabolism. The protein is Adenylate kinase of Oenococcus oeni (strain ATCC BAA-331 / PSU-1).